Reading from the N-terminus, the 862-residue chain is Leucine--tRNA ligase (862 aa).

The 'HIGH' region motif lies at 51–61; it reads PYPSGSLHMGH. The short motif at 624–628 is the 'KMSKS' region element; it reads KMSKS. ATP is bound at residue K627.

It belongs to the class-I aminoacyl-tRNA synthetase family.

It localises to the cytoplasm. It catalyses the reaction tRNA(Leu) + L-leucine + ATP = L-leucyl-tRNA(Leu) + AMP + diphosphate. The sequence is that of Leucine--tRNA ligase from Prochlorococcus marinus (strain NATL1A).